Here is a 176-residue protein sequence, read N- to C-terminus: ATP synthase subunit b, chloroplastic (176 aa).

Residues 19–39 (LDLLETNIINIFILIIILIYL) form a helical membrane-spanning segment.

The protein belongs to the ATPase B chain family. F-type ATPases have 2 components, F(1) - the catalytic core - and F(0) - the membrane proton channel. F(1) has five subunits: alpha(3), beta(3), gamma(1), delta(1), epsilon(1). F(0) has four main subunits: a(1), b(1), b'(1) and c(10-14). The alpha and beta chains form an alternating ring which encloses part of the gamma chain. F(1) is attached to F(0) by a central stalk formed by the gamma and epsilon chains, while a peripheral stalk is formed by the delta, b and b' chains.

Its subcellular location is the plastid. The protein localises to the chloroplast thylakoid membrane. Its function is as follows. F(1)F(0) ATP synthase produces ATP from ADP in the presence of a proton or sodium gradient. F-type ATPases consist of two structural domains, F(1) containing the extramembraneous catalytic core and F(0) containing the membrane proton channel, linked together by a central stalk and a peripheral stalk. During catalysis, ATP synthesis in the catalytic domain of F(1) is coupled via a rotary mechanism of the central stalk subunits to proton translocation. Component of the F(0) channel, it forms part of the peripheral stalk, linking F(1) to F(0). The polypeptide is ATP synthase subunit b, chloroplastic (Galdieria sulphuraria (Red alga)).